The sequence spans 911 residues: Chitin synthase G (911 aa).

2 disordered regions span residues 1 to 66 and 107 to 138; these read MAYQ…VSGY and GRVA…GGLR. The span at 12 to 34 shows a compositional bias: basic and acidic residues; sequence PHYDDNGHRLQDLPHGSYEEEAS. Residues 54-66 are compositionally biased toward polar residues; sequence QHGSSTTRPVSGY. The next 6 helical transmembrane spans lie at 579 to 599, 624 to 644, 659 to 679, 711 to 731, 840 to 860, and 879 to 899; these read IFST…TTVI, IINT…FILA, SFVV…YLVV, IIII…FMYL, LVTF…SDGV, and ALLW…CWFL.

The protein belongs to the chitin synthase family. Class III subfamily.

Its subcellular location is the cell membrane. It catalyses the reaction [(1-&gt;4)-N-acetyl-beta-D-glucosaminyl](n) + UDP-N-acetyl-alpha-D-glucosamine = [(1-&gt;4)-N-acetyl-beta-D-glucosaminyl](n+1) + UDP + H(+). Functionally, polymerizes chitin, a structural polymer of the cell wall and septum, by transferring the sugar moiety of UDP-GlcNAc to the non-reducing end of the growing chitin polymer. This chain is Chitin synthase G (chsG), found in Aspergillus fumigatus (strain ATCC MYA-4609 / CBS 101355 / FGSC A1100 / Af293) (Neosartorya fumigata).